Here is a 160-residue protein sequence, read N- to C-terminus: Oligoribonuclease (160 aa).

In terms of domain architecture, Exonuclease spans 8–158; it reads LIWIDLEMTG…YNKLKKKTLI (151 aa). Residue Y129 is part of the active site.

The protein belongs to the oligoribonuclease family.

Its subcellular location is the cytoplasm. Its function is as follows. 3'-to-5' exoribonuclease specific for small oligoribonucleotides. The polypeptide is Oligoribonuclease (orn) (Buchnera aphidicola subsp. Baizongia pistaciae (strain Bp)).